The primary structure comprises 267 residues: Hydroxyethylthiazole kinase (267 aa).

Methionine 42 is a binding site for substrate. Residues arginine 118 and serine 164 each coordinate ATP. Residue alanine 191 coordinates substrate.

The protein belongs to the Thz kinase family. The cofactor is Mg(2+).

The enzyme catalyses 5-(2-hydroxyethyl)-4-methylthiazole + ATP = 4-methyl-5-(2-phosphooxyethyl)-thiazole + ADP + H(+). Its pathway is cofactor biosynthesis; thiamine diphosphate biosynthesis; 4-methyl-5-(2-phosphoethyl)-thiazole from 5-(2-hydroxyethyl)-4-methylthiazole: step 1/1. Catalyzes the phosphorylation of the hydroxyl group of 4-methyl-5-beta-hydroxyethylthiazole (THZ). The polypeptide is Hydroxyethylthiazole kinase (Pasteurella multocida (strain Pm70)).